The sequence spans 285 residues: CBY1-interacting BAR domain-containing protein 1-B (285 aa).

The transit peptide at 1–48 (MSQTPEARTRDNQTRQIQESVNNVEKHFGELCQIFAGYVRKTARLRDK) directs the protein to the mitochondrion. A BAR-like region spans residues 11–221 (DNQTRQIQES…DIDEEEDLEV (211 aa)). Residues 142 to 184 (RQIISQAETELQRATMDAARISQQLEETIDNFEKQKIKDIKKL) adopt a coiled-coil conformation. Positions 241-261 (NSRSGSTSRAPSVISQPPGNR) are enriched in polar residues. The segment at 241 to 285 (NSRSGSTSRAPSVISQPPGNRQKNRMEDDEDGEDDNDENSTEDEN) is disordered. Residues 267–285 (EDDEDGEDDNDENSTEDEN) show a composition bias toward acidic residues.

Belongs to the CIBAR family.

It is found in the cytoplasm. Its subcellular location is the cytoskeleton. The protein localises to the microtubule organizing center. The protein resides in the centrosome. It localises to the centriole. It is found in the cell projection. Its subcellular location is the cilium. The protein localises to the nucleus. The protein resides in the mitochondrion inner membrane. It localises to the flagellum. Plays a critical role in regulating mitochondrial ultrastructure and function by maintaining the integrity of mitochondrial morphology, particularly the organization of cristae. Plays a crucial role in ciliogenesis. Plays a key role in the correct positioning of the annulus, a septin-based ring structure in the sperm flagellum, serving both as a physical barrier and a membrane diffusion barrier that separates the midpiece (MP) from the principal piece (PP). The protein is CBY1-interacting BAR domain-containing protein 1-B of Xenopus laevis (African clawed frog).